The sequence spans 345 residues: S-adenosylmethionine:tRNA ribosyltransferase-isomerase (345 aa).

The protein belongs to the QueA family. In terms of assembly, monomer.

Its subcellular location is the cytoplasm. It catalyses the reaction 7-aminomethyl-7-carbaguanosine(34) in tRNA + S-adenosyl-L-methionine = epoxyqueuosine(34) in tRNA + adenine + L-methionine + 2 H(+). The protein operates within tRNA modification; tRNA-queuosine biosynthesis. Functionally, transfers and isomerizes the ribose moiety from AdoMet to the 7-aminomethyl group of 7-deazaguanine (preQ1-tRNA) to give epoxyqueuosine (oQ-tRNA). The sequence is that of S-adenosylmethionine:tRNA ribosyltransferase-isomerase from Anaeromyxobacter sp. (strain K).